Here is a 601-residue protein sequence, read N- to C-terminus: MKHWIQENYKNRSWAGELNESQEGKQIVLFGWSFRFRDQGGVIFIDLRDRTGIIQVVARKELLGDSFTLAEKVRSEYVLAVRGTLKKRDLESINPRMQTGTIEVVLDQLEILNVAKTPPFSLDEFDEVSEELKLKYRYLDFRREELKNRMIKRHEFIFAIRNYLNKRKFVEIETPILNKSTPEGARDFLVPSRLNPNQFYALPQSPQIFKQILMVGGMERYFQIVKCFRDEDLRADRQPEFTQLDMEFSFVSQEEILSEIEGLVETIYKEVFNIQLSIPFPRMTYNTAMEEYGSDKPDLRFGMKLVDVSEIVKDCDFNVFAGAVKNGGTVKVVCVPGGSIISRKEIEDYTAWLNRDYKAKGLAYMKHGTEGLESTITKRFKKEELEAISKACGSKEGDMLFFGADEREIVNHSLGALRLKLSERFETPKENEINITWIVDFPMFEWNKDHKRWDALHHPFTSPSDESIPFFESMETLQKNAGNATAKAYDLVMNGVEIGGGSIRIHSREIQNKVFQILGINEEEAKEKFGFLLEALEFGAPPHGGLAFGIDRMLMLLTGGKSIRDVIAFPKTQKGLCLMSECPSPVEEKQLQELKIKLAKV.

Residue glutamate 183 coordinates L-aspartate. An aspartate region spans residues 207–210; the sequence is QIFK. Residue arginine 229 participates in L-aspartate binding. ATP-binding positions include 229–231 and glutamine 238; that span reads RDE. Residue histidine 457 participates in L-aspartate binding. Glutamate 497 contacts ATP. Residue arginine 504 coordinates L-aspartate. 549 to 552 is an ATP binding site; that stretch reads GIDR.

The protein belongs to the class-II aminoacyl-tRNA synthetase family. Type 1 subfamily. In terms of assembly, homodimer.

The protein resides in the cytoplasm. It catalyses the reaction tRNA(Asp) + L-aspartate + ATP = L-aspartyl-tRNA(Asp) + AMP + diphosphate. Functionally, catalyzes the attachment of L-aspartate to tRNA(Asp) in a two-step reaction: L-aspartate is first activated by ATP to form Asp-AMP and then transferred to the acceptor end of tRNA(Asp). This chain is Aspartate--tRNA ligase, found in Leptospira interrogans serogroup Icterohaemorrhagiae serovar Lai (strain 56601).